An 862-amino-acid polypeptide reads, in one-letter code: Protein translocase subunit SecA (862 aa).

ATP is bound by residues Gln86, 104-108 (GEGKT), and Asp499. Positions 848, 850, 859, and 860 each coordinate Zn(2+).

It belongs to the SecA family. Monomer and homodimer. Part of the essential Sec protein translocation apparatus which comprises SecA, SecYEG and auxiliary proteins SecDF-YajC and YidC. It depends on Zn(2+) as a cofactor.

The protein localises to the cell inner membrane. The protein resides in the cytoplasm. It carries out the reaction ATP + H2O + cellular proteinSide 1 = ADP + phosphate + cellular proteinSide 2.. Functionally, part of the Sec protein translocase complex. Interacts with the SecYEG preprotein conducting channel. Has a central role in coupling the hydrolysis of ATP to the transfer of proteins into and across the cell membrane, serving both as a receptor for the preprotein-SecB complex and as an ATP-driven molecular motor driving the stepwise translocation of polypeptide chains across the membrane. This Ehrlichia canis (strain Jake) protein is Protein translocase subunit SecA.